The primary structure comprises 443 residues: Trigger factor (443 aa).

The 86-residue stretch at 165–250 (GDQIVMDFLG…VKEVKKPVPA (86 aa)) folds into the PPIase FKBP-type domain.

Belongs to the FKBP-type PPIase family. Tig subfamily.

The protein localises to the cytoplasm. It catalyses the reaction [protein]-peptidylproline (omega=180) = [protein]-peptidylproline (omega=0). Functionally, involved in protein export. Acts as a chaperone by maintaining the newly synthesized protein in an open conformation. Functions as a peptidyl-prolyl cis-trans isomerase. This chain is Trigger factor, found in Roseobacter denitrificans (strain ATCC 33942 / OCh 114) (Erythrobacter sp. (strain OCh 114)).